The chain runs to 248 residues: Cobalt-precorrin-6A reductase (248 aa).

This sequence belongs to the precorrin-6x reductase family.

The catalysed reaction is Co-precorrin-6B + NAD(+) = Co-precorrin-6A + NADH + H(+). It participates in cofactor biosynthesis; adenosylcobalamin biosynthesis; cob(II)yrinate a,c-diamide from sirohydrochlorin (anaerobic route): step 7/10. Functionally, catalyzes the reduction of the macrocycle of cobalt-precorrin-6A to cobalt-precorrin-6B. The polypeptide is Cobalt-precorrin-6A reductase (cbiJ) (Methanococcus maripaludis (Methanococcus deltae)).